Reading from the N-terminus, the 371-residue chain is Protein MxiG (371 aa).

Residues 127 to 141 (VFFFFAVIVVLIIIF) traverse the membrane as a helical segment.

It localises to the cell inner membrane. The protein localises to the cell outer membrane. Functionally, involved in the secretion of the Ipa antigens. Involved in the intracellular dissemination of Shigella. Part of the Mxi-Spa secretion apparatus. The polypeptide is Protein MxiG (mxiG) (Shigella flexneri).